We begin with the raw amino-acid sequence, 49 residues long: Delta-actitoxin-Axm1h (49 aa).

Intrachain disulfides connect Cys-4–Cys-46, Cys-6–Cys-36, and Cys-29–Cys-47.

This sequence belongs to the sea anemone sodium channel inhibitory toxin family. Type I subfamily.

The protein localises to the secreted. It localises to the nematocyst. In terms of biological role, binds specifically to voltage-gated sodium channels (Nav) (site 3), thereby delaying their inactivation during signal transduction. Thus it may strongly stimulate mammalian cardiac muscle contraction. This Anthopleura xanthogrammica (Giant green sea anemone) protein is Delta-actitoxin-Axm1h.